Consider the following 412-residue polypeptide: uncharacterized protein (412 aa).

Histidine 49 serves as a coordination point for Zn(2+). Residue glutamate 52 is the Proton acceptor of the active site. Zn(2+)-binding residues include histidine 53 and glutamate 129.

The protein belongs to the peptidase M16 family. Zn(2+) serves as cofactor.

This is an uncharacterized protein from Rickettsia felis (strain ATCC VR-1525 / URRWXCal2) (Rickettsia azadi).